Here is a 134-residue protein sequence, read N- to C-terminus: MSDLTKKDDEYWRDKLDAEQFRICREKGTERPFTGEYCDSKEPGTYLCRCCAEPLFESATKYDSGSGWPSFFQPIKGDAVGEIKDTSHGMVRVEVVCHNCGCHLGHVFPDGPKPTGLRYCINSASIQLQKEGAE.

One can recognise a MsrB domain in the interval 9 to 131 (DEYWRDKLDA…NSASIQLQKE (123 aa)). Residues C48, C51, C97, and C100 each coordinate Zn(2+). C120 serves as the catalytic Nucleophile.

This sequence belongs to the MsrB Met sulfoxide reductase family. Zn(2+) is required as a cofactor.

It catalyses the reaction L-methionyl-[protein] + [thioredoxin]-disulfide + H2O = L-methionyl-(R)-S-oxide-[protein] + [thioredoxin]-dithiol. In Saccharophagus degradans (strain 2-40 / ATCC 43961 / DSM 17024), this protein is Peptide methionine sulfoxide reductase MsrB.